A 221-amino-acid polypeptide reads, in one-letter code: Ribosomal RNA large subunit methyltransferase E (221 aa).

Glycine 60, tryptophan 62, aspartate 89, aspartate 105, and aspartate 134 together coordinate S-adenosyl-L-methionine. Lysine 174 functions as the Proton acceptor in the catalytic mechanism.

Belongs to the class I-like SAM-binding methyltransferase superfamily. RNA methyltransferase RlmE family.

It is found in the cytoplasm. It carries out the reaction uridine(2552) in 23S rRNA + S-adenosyl-L-methionine = 2'-O-methyluridine(2552) in 23S rRNA + S-adenosyl-L-homocysteine + H(+). In terms of biological role, specifically methylates the uridine in position 2552 of 23S rRNA at the 2'-O position of the ribose in the fully assembled 50S ribosomal subunit. The polypeptide is Ribosomal RNA large subunit methyltransferase E (Cupriavidus necator (strain ATCC 17699 / DSM 428 / KCTC 22496 / NCIMB 10442 / H16 / Stanier 337) (Ralstonia eutropha)).